Reading from the N-terminus, the 228-residue chain is Uracil-DNA glycosylase (228 aa).

The Proton acceptor role is filled by Asp-64.

Belongs to the uracil-DNA glycosylase (UDG) superfamily. UNG family.

It is found in the cytoplasm. The catalysed reaction is Hydrolyzes single-stranded DNA or mismatched double-stranded DNA and polynucleotides, releasing free uracil.. Functionally, excises uracil residues from the DNA which can arise as a result of misincorporation of dUMP residues by DNA polymerase or due to deamination of cytosine. The protein is Uracil-DNA glycosylase of Yersinia pseudotuberculosis serotype IB (strain PB1/+).